The following is a 132-amino-acid chain: UPF0292 protein PH1700 (132 aa).

The 81-residue stretch at 20–100 folds into the Toprim domain; that stretch reads EGAIIVEGAR…KVDTETRREL (81 aa). Mg(2+) is bound by residues Glu26, Asp69, and Asp71.

This sequence belongs to the UPF0292 family. Mg(2+) serves as cofactor.

The chain is UPF0292 protein PH1700 from Pyrococcus horikoshii (strain ATCC 700860 / DSM 12428 / JCM 9974 / NBRC 100139 / OT-3).